Consider the following 533-residue polypeptide: Probable protein kinase UbiB (533 aa).

The chain crosses the membrane as a helical span at residues 24–44; it reads LILELPMLPWWLRLLGATLPW. The region spanning 126-494 is the Protein kinase domain; that stretch reads RFEREPLASA…WKGSRHDWLG (369 aa). ATP-binding positions include 132-140 and K154; that span reads LASASVAQV. The active-site Proton acceptor is D289. Residues 510-530 traverse the membrane as a helical segment; the sequence is LGQQLEAWPAWVMLAGGVFLI.

This sequence belongs to the ABC1 family. UbiB subfamily.

It localises to the cell inner membrane. Its pathway is cofactor biosynthesis; ubiquinone biosynthesis [regulation]. Is probably a protein kinase regulator of UbiI activity which is involved in aerobic coenzyme Q (ubiquinone) biosynthesis. The chain is Probable protein kinase UbiB from Pseudomonas aeruginosa (strain ATCC 15692 / DSM 22644 / CIP 104116 / JCM 14847 / LMG 12228 / 1C / PRS 101 / PAO1).